The chain runs to 536 residues: Heat shock factor protein 2 (536 aa).

Glycyl lysine isopeptide (Lys-Gly) (interchain with G-Cter in SUMO2) cross-links involve residues Lys-2 and Lys-82. The DNA-binding element occupies 7–112 (VPAFLSKLWT…LLENIKRKVS (106 aa)). The short motif at 108–122 (KRKVSSSKPEENKIR) is the Nuclear localization signal element. Residues 119–192 (NKIRQEDLTK…VTLVQNNQLV (74 aa)) form a hydrophobic repeat HR-A/B region. Glycyl lysine isopeptide (Lys-Gly) (interchain with G-Cter in SUMO2) cross-links involve residues Lys-135, Lys-139, Lys-151, Lys-210, Lys-218, and Lys-237. Positions 195–210 (KRKRPLLLNTNGAQKK) match the Nuclear localization signal motif. The segment at 300–337 (QSGEQNEPARESLSSGSDGSSPLMSSAVQLNGSSSLTS) is disordered. The segment covering 311–325 (SLSSGSDGSSPLMSS) has biased composition (low complexity). Over residues 326–337 (AVQLNGSSSLTS) the composition is skewed to polar residues. Positions 360–385 (LLDYLDSIDCSLEDFQAMLSGRQFSI) are hydrophobic repeat HR-C. Residues 407–438 (NNTKSENKGLETTKNNVVQPVSEEGRKSKSKP) are disordered. Residues 429-438 (EEGRKSKSKP) show a composition bias toward basic and acidic residues.

Belongs to the HSF family. In terms of assembly, DNA-binding homotrimer in stressed or heat shocked cells, otherwise found as a homodimer.

The protein localises to the cytoplasm. It is found in the nucleus. DNA-binding protein that specifically binds heat shock promoter elements (HSE) and activates transcription. In higher eukaryotes, HSF is unable to bind to the HSE unless the cells are heat shocked. The polypeptide is Heat shock factor protein 2 (HSF2) (Homo sapiens (Human)).